Consider the following 303-residue polypeptide: Peroxisomal trans-2-enoyl-CoA reductase (303 aa).

23–47 (VTGGATGIGKAIVKELLELGSNVVI) lines the NADP(+) pocket. Residue K32 is modified to N6-succinyllysine. S49 carries the phosphoserine modification. Y179 acts as the Proton acceptor in catalysis. Phosphotyrosine is present on Y179. The short motif at 301–303 (AKL) is the Microbody targeting signal element.

It belongs to the short-chain dehydrogenases/reductases (SDR) family. Interacts with PEX5, probably required to target it into peroxisomes.

The protein resides in the peroxisome. The enzyme catalyses a (2E)-enoyl-CoA + NADPH + H(+) = a 2,3-saturated acyl-CoA + NADP(+). The catalysed reaction is (2E)-decenoyl-CoA + NADPH + H(+) = decanoyl-CoA + NADP(+). It catalyses the reaction (2E)-hexenoyl-CoA + NADPH + H(+) = hexanoyl-CoA + NADP(+). It carries out the reaction (2E)-octenoyl-CoA + NADPH + H(+) = octanoyl-CoA + NADP(+). The enzyme catalyses (2E)-dodecenoyl-CoA + NADPH + H(+) = dodecanoyl-CoA + NADP(+). The catalysed reaction is (2E)-tetradecenoyl-CoA + NADPH + H(+) = tetradecanoyl-CoA + NADP(+). It functions in the pathway lipid metabolism; fatty acid biosynthesis. Its function is as follows. Participates in chain elongation of fatty acids. Catalyzes the reduction of trans-2-enoyl-CoAs of varying chain lengths from 6:1 to 16:1, having maximum activity with 10:1 CoA. Has no 2,4-dienoyl-CoA reductase activity. The sequence is that of Peroxisomal trans-2-enoyl-CoA reductase from Homo sapiens (Human).